A 144-amino-acid polypeptide reads, in one-letter code: Large ribosomal subunit protein bL31c (144 aa).

The N-terminal 48 residues, 1–48 (MAVSLPNSFLQISPCVPSLQLRKPVMAAVKGGKQSVRRSSNTVVQITC), are a transit peptide targeting the chloroplast.

Belongs to the bacterial ribosomal protein bL31 family. Type A subfamily. In terms of assembly, part of the 50S ribosomal subunit.

The protein resides in the plastid. It is found in the chloroplast. Functionally, binds the 23S rRNA. This Arabidopsis thaliana (Mouse-ear cress) protein is Large ribosomal subunit protein bL31c (RPL31).